The chain runs to 162 residues: MAELIIVYFSSKSNNTHRFVQKLGLPAQRIPVDNRPLEVSTHYLLIVPTYAAGGSDAKGAVPKQVIRFLNNPNNRKHCKGVISSGNTNFGDTFALAGPIISQKLQVPLLHQFELLGTATDVKKVQAIFARLKHHTHDKQKQTNNLITERTHPCHKPMRHTSH.

It belongs to the NrdI family.

Functionally, probably involved in ribonucleotide reductase function. The chain is Protein NrdI from Streptococcus pyogenes serotype M3 (strain ATCC BAA-595 / MGAS315).